A 245-amino-acid polypeptide reads, in one-letter code: UPF0319 protein VV0984 (245 aa).

The signal sequence occupies residues 1 to 20 (MRYIGKWMMLGALVSSSVFA).

This sequence belongs to the UPF0319 family.

This chain is UPF0319 protein VV0984, found in Vibrio vulnificus (strain YJ016).